The following is a 172-amino-acid chain: Nicotinamide-nucleotide adenylyltransferase (172 aa).

Belongs to the archaeal NMN adenylyltransferase family.

Its subcellular location is the cytoplasm. The catalysed reaction is beta-nicotinamide D-ribonucleotide + ATP + H(+) = diphosphate + NAD(+). It functions in the pathway cofactor biosynthesis; NAD(+) biosynthesis; NAD(+) from nicotinamide D-ribonucleotide: step 1/1. The protein is Nicotinamide-nucleotide adenylyltransferase of Saccharolobus solfataricus (strain ATCC 35092 / DSM 1617 / JCM 11322 / P2) (Sulfolobus solfataricus).